The sequence spans 330 residues: Aspartate--ammonia ligase (330 aa).

This sequence belongs to the class-II aminoacyl-tRNA synthetase family. AsnA subfamily.

It is found in the cytoplasm. The enzyme catalyses L-aspartate + NH4(+) + ATP = L-asparagine + AMP + diphosphate + H(+). It participates in amino-acid biosynthesis; L-asparagine biosynthesis; L-asparagine from L-aspartate (ammonia route): step 1/1. This Pectobacterium carotovorum subsp. carotovorum (strain PC1) protein is Aspartate--ammonia ligase.